Reading from the N-terminus, the 404-residue chain is Tripartite motif-containing 13 (404 aa).

The RING-type zinc-finger motif lies at 10 to 56 (CPICCCLFEDPRVLPCSHSFCKKCLEGILDGNRSPTWRPPFKCPTCR). The B box-type zinc finger occupies 87–129 (PRMSQCRVHSGQPLNIFCATDLKLICGFCATTGDHKGHKFCAL). Residues C92, H95, C115, and H121 each contribute to the Zn(2+) site. A helical membrane pass occupies residues 102–119 (IFCATDLKLICGFCATTG). Residues 186–236 (KLLRTLEHKRSEILSDLETLKLAVMQTFDPEINRLRSALEEQRRALNIAES) adopt a coiled-coil conformation.

The protein resides in the endoplasmic reticulum membrane. It functions in the pathway protein modification; protein ubiquitination. E3 ubiquitin ligase involved in the retrotranslocation and turnover of membrane and secretory proteins from the ER through a set of processes named ER-associated degradation (ERAD). This process acts on misfolded proteins as well as in the regulated degradation of correctly folded proteins. In Danio rerio (Zebrafish), this protein is Tripartite motif-containing 13 (trim13).